Here is a 496-residue protein sequence, read N- to C-terminus: MSNQHIEELNDQQIVRREKMAALTEQGIDPFGKRFERTATSGQLNEKYADKSKEDLHDIEETATIAGRLMTKRGKGKVGFAHIQDREGQIQIYVRKDSVGEENYEIFKKADLGDFLGVEGQVMRTDMGELSIKATHITHLSKALRPLPEKFHGLTDIETIYRKRHLDLISNRDSFDRFVTRSKIISEIRRFMDSNGFLEVETPVLHNEAGGASARPFITHHNAQDIDMVLRIATELHLKRLIVGGMERVYEIGRIFRNEGMDATHNPEFTSIEAYQAYADYQDIMDLTEGIIQHVTKTVKGDGPINYQGTEIKINEPFKRVHMVDAVKEITGIDFWKEMTLEEAQALAQEKNVPLEKHFTTVGHIINAFFEEFVEDTLIQPTFVFGHPVEVSPLAKKNDTDPRFTDRFELFIMTKEYANAFTELNDPIDQLSRFEAQASAKELGDDEATGVDYDYVEALEYGMPPTGGLGIGIDRLCMLLTDTTTIRDVLLFPTMK.

Residues E409 and E416 each coordinate Mg(2+).

The protein belongs to the class-II aminoacyl-tRNA synthetase family. In terms of assembly, homodimer. Mg(2+) is required as a cofactor.

The protein resides in the cytoplasm. It catalyses the reaction tRNA(Lys) + L-lysine + ATP = L-lysyl-tRNA(Lys) + AMP + diphosphate. The polypeptide is Lysine--tRNA ligase (Streptococcus agalactiae serotype III (strain NEM316)).